Consider the following 65-residue polypeptide: MLIGQKVRIKYSKSKIANDIAVRVGDIGVIRGIKFINNQCVTIIVEFENHTRLWMFREELIYLNK.

It localises to the plastid. The protein resides in the chloroplast. This is an uncharacterized protein from Porphyra purpurea (Red seaweed).